A 410-amino-acid polypeptide reads, in one-letter code: Cysteine desulfurase IscS (410 aa).

Pyridoxal 5'-phosphate-binding positions include 79-80 (AT), Asn-159, Gln-187, and 207-209 (SGH). Lys-210 bears the N6-(pyridoxal phosphate)lysine mark. Position 248 (Thr-248) interacts with pyridoxal 5'-phosphate. Residue Cys-334 is the Cysteine persulfide intermediate of the active site. Position 334 (Cys-334) interacts with [2Fe-2S] cluster.

This sequence belongs to the class-V pyridoxal-phosphate-dependent aminotransferase family. NifS/IscS subfamily. As to quaternary structure, homodimer. Forms a heterotetramer with IscU, interacts with other sulfur acceptors. It depends on pyridoxal 5'-phosphate as a cofactor.

Its subcellular location is the cytoplasm. It carries out the reaction (sulfur carrier)-H + L-cysteine = (sulfur carrier)-SH + L-alanine. It participates in cofactor biosynthesis; iron-sulfur cluster biosynthesis. Master enzyme that delivers sulfur to a number of partners involved in Fe-S cluster assembly, tRNA modification or cofactor biosynthesis. Catalyzes the removal of elemental sulfur atoms from cysteine to produce alanine. Functions as a sulfur delivery protein for Fe-S cluster synthesis onto IscU, an Fe-S scaffold assembly protein, as well as other S acceptor proteins. The protein is Cysteine desulfurase IscS of Ehrlichia chaffeensis (strain ATCC CRL-10679 / Arkansas).